The primary structure comprises 139 residues: Peptide methionine sulfoxide reductase MsrB (139 aa).

Positions 9–131 constitute a MsrB domain; the sequence is TPSDNTELTE…NSASLSFIDD (123 aa). Residues Cys-48, Cys-51, Cys-97, and Cys-100 each contribute to the Zn(2+) site. The active-site Nucleophile is Cys-120.

Belongs to the MsrB Met sulfoxide reductase family. The cofactor is Zn(2+).

It catalyses the reaction L-methionyl-[protein] + [thioredoxin]-disulfide + H2O = L-methionyl-(R)-S-oxide-[protein] + [thioredoxin]-dithiol. The protein is Peptide methionine sulfoxide reductase MsrB of Pectobacterium carotovorum subsp. carotovorum (strain PC1).